A 371-amino-acid polypeptide reads, in one-letter code: tRNA (guanine(26)-N(2))-dimethyltransferase (371 aa).

The region spanning 4–368 is the Trm1 methyltransferase domain; that stretch reads VEVTEGRTRF…APLPVLEKVV (365 aa). The S-adenosyl-L-methionine site is built by Arg-41, Arg-66, Asp-82, Asp-108, and Ala-109. Residues Cys-237, Cys-240, Cys-256, and Cys-259 each coordinate Zn(2+).

It belongs to the class I-like SAM-binding methyltransferase superfamily. Trm1 family.

It carries out the reaction guanosine(26) in tRNA + 2 S-adenosyl-L-methionine = N(2)-dimethylguanosine(26) in tRNA + 2 S-adenosyl-L-homocysteine + 2 H(+). In terms of biological role, dimethylates a single guanine residue at position 26 of a number of tRNAs using S-adenosyl-L-methionine as donor of the methyl groups. This Methanoculleus marisnigri (strain ATCC 35101 / DSM 1498 / JR1) protein is tRNA (guanine(26)-N(2))-dimethyltransferase.